Reading from the N-terminus, the 126-residue chain is Holo-[acyl-carrier-protein] synthase (126 aa).

2 residues coordinate Mg(2+): Asp9 and Glu58.

It belongs to the P-Pant transferase superfamily. AcpS family. It depends on Mg(2+) as a cofactor.

The protein localises to the cytoplasm. It catalyses the reaction apo-[ACP] + CoA = holo-[ACP] + adenosine 3',5'-bisphosphate + H(+). In terms of biological role, transfers the 4'-phosphopantetheine moiety from coenzyme A to a Ser of acyl-carrier-protein. This chain is Holo-[acyl-carrier-protein] synthase, found in Escherichia coli (strain ATCC 8739 / DSM 1576 / NBRC 3972 / NCIMB 8545 / WDCM 00012 / Crooks).